We begin with the raw amino-acid sequence, 333 residues long: Adenosine deaminase (333 aa).

Zn(2+) is bound by residues histidine 12 and histidine 14. 3 residues coordinate substrate: histidine 14, aspartate 16, and glycine 170. Zn(2+) is bound at residue histidine 197. The Proton donor role is filled by glutamate 200. Aspartate 278 lines the Zn(2+) pocket. Aspartate 279 contributes to the substrate binding site.

This sequence belongs to the metallo-dependent hydrolases superfamily. Adenosine and AMP deaminases family. Adenosine deaminase subfamily. Requires Zn(2+) as cofactor.

It catalyses the reaction adenosine + H2O + H(+) = inosine + NH4(+). The enzyme catalyses 2'-deoxyadenosine + H2O + H(+) = 2'-deoxyinosine + NH4(+). In terms of biological role, catalyzes the hydrolytic deamination of adenosine and 2-deoxyadenosine. The sequence is that of Adenosine deaminase from Pseudoalteromonas translucida (strain TAC 125).